The primary structure comprises 293 residues: Putative metal ABC transporter substrate-binding protein Hpf (293 aa).

Positions 1-22 (MRNSFKIMTALALGLFAMQANA) are cleaved as a signal peptide. The interval 23 to 48 (KFKVVTTFTVIQDIAQNVAGNAATVE) is interaction with host components. The a divalent metal cation site is built by His-58, His-123, Glu-189, and Asp-264.

Belongs to the bacterial solute-binding protein 9 family. In terms of assembly, interacts with host laminin and vitronectin. Can interact with both immobilized and soluble vitronectin.

It localises to the cell outer membrane. The protein resides in the cell surface. Its subcellular location is the periplasm. Part of an ATP-binding cassette (ABC) transport system involved in metal import. Binds a metal with high affinity and specificity and delivers it to the membrane permease for translocation into the cytoplasm. Acts as an adhesin that promotes binding of H.influenzae to host laminin and vitronectin. In addition, interaction with serum vitronectin plays an important role in bacterial serum resistance. The polypeptide is Putative metal ABC transporter substrate-binding protein Hpf (hpf) (Haemophilus influenzae (strain NTHi 3655)).